A 78-amino-acid polypeptide reads, in one-letter code: Putative membrane protein insertion efficiency factor (78 aa).

Belongs to the UPF0161 family.

It localises to the cell membrane. In terms of biological role, could be involved in insertion of integral membrane proteins into the membrane. The sequence is that of Putative membrane protein insertion efficiency factor from Bacillus cereus (strain G9842).